The sequence spans 230 residues: Ribosome-recycling factor, mitochondrial (230 aa).

Residues 1-24 constitute a mitochondrion transit peptide; it reads MILTTARLNCRPVTVPRLFNRSFS.

It belongs to the RRF family.

The protein resides in the mitochondrion. Necessary for protein synthesis in mitochondria. Functions as a ribosome recycling factor in mitochondria. In Saccharomyces cerevisiae (strain ATCC 204508 / S288c) (Baker's yeast), this protein is Ribosome-recycling factor, mitochondrial (RRF1).